The sequence spans 148 residues: UPF0756 membrane protein YeaL (148 aa).

4 helical membrane-spanning segments follow: residues 14–34 (ALGF…LIIV), 51–71 (LSIG…SGTL), 86–106 (LVAI…VTLM), and 121–141 (VLGV…AGLV).

The protein belongs to the UPF0756 family.

The protein resides in the cell membrane. The polypeptide is UPF0756 membrane protein YeaL (Escherichia coli O127:H6 (strain E2348/69 / EPEC)).